Consider the following 235-residue polypeptide: Ribonuclease PH (235 aa).

Phosphate-binding positions include arginine 86 and 124 to 126 (GTR).

It belongs to the RNase PH family. In terms of assembly, homohexameric ring arranged as a trimer of dimers.

The catalysed reaction is tRNA(n+1) + phosphate = tRNA(n) + a ribonucleoside 5'-diphosphate. Functionally, phosphorolytic 3'-5' exoribonuclease that plays an important role in tRNA 3'-end maturation. Removes nucleotide residues following the 3'-CCA terminus of tRNAs; can also add nucleotides to the ends of RNA molecules by using nucleoside diphosphates as substrates, but this may not be physiologically important. Probably plays a role in initiation of 16S rRNA degradation (leading to ribosome degradation) during starvation. This Francisella tularensis subsp. holarctica (strain FTNF002-00 / FTA) protein is Ribonuclease PH.